The following is a 347-amino-acid chain: tRNA N6-adenosine threonylcarbamoyltransferase (347 aa).

2 residues coordinate Fe cation: His117 and His121. Substrate contacts are provided by residues 140–144, Asp173, Gly186, and Asn280; that span reads LVSGG. Asp308 contributes to the Fe cation binding site.

The protein belongs to the KAE1 / TsaD family. Fe(2+) serves as cofactor.

The protein localises to the cytoplasm. The catalysed reaction is L-threonylcarbamoyladenylate + adenosine(37) in tRNA = N(6)-L-threonylcarbamoyladenosine(37) in tRNA + AMP + H(+). In terms of biological role, required for the formation of a threonylcarbamoyl group on adenosine at position 37 (t(6)A37) in tRNAs that read codons beginning with adenine. Is involved in the transfer of the threonylcarbamoyl moiety of threonylcarbamoyl-AMP (TC-AMP) to the N6 group of A37, together with TsaE and TsaB. TsaD likely plays a direct catalytic role in this reaction. The sequence is that of tRNA N6-adenosine threonylcarbamoyltransferase from Psychrobacter sp. (strain PRwf-1).